The chain runs to 395 residues: Phosphonoacetaldehyde reductase (395 aa).

Residues D199, H268, and H282 each contribute to the Fe cation site.

Belongs to the iron-containing alcohol dehydrogenase family. Fe cation serves as cofactor.

It carries out the reaction 2-hydroxyethylphosphonate + NAD(+) = phosphonoacetaldehyde + NADH + H(+). The protein operates within secondary metabolite biosynthesis; bialaphos biosynthesis. In terms of biological role, catalyzes the reduction of phosphonoacetaldehyde to 2-hydroxyethylphosphonate, a step in the biosynthesis of phosphinothricin tripeptide. Phosphinothricin tripeptide (PTT), also known as bialaphos (BA), is a natural-product antibiotic and potent herbicide. Can use both NAD and NADP but the preferred substrate is NAD. The polypeptide is Phosphonoacetaldehyde reductase (phpC) (Streptomyces viridochromogenes (strain DSM 40736 / JCM 4977 / BCRC 1201 / Tue 494)).